Consider the following 174-residue polypeptide: NADH-quinone oxidoreductase subunit B 2 (174 aa).

Residues C53, C54, C118, and C148 each coordinate [4Fe-4S] cluster.

Belongs to the complex I 20 kDa subunit family. In terms of assembly, NDH-1 is composed of 14 different subunits. Subunits NuoB, C, D, E, F, and G constitute the peripheral sector of the complex. Requires [4Fe-4S] cluster as cofactor.

It localises to the cell inner membrane. The catalysed reaction is a quinone + NADH + 5 H(+)(in) = a quinol + NAD(+) + 4 H(+)(out). Functionally, NDH-1 shuttles electrons from NADH, via FMN and iron-sulfur (Fe-S) centers, to quinones in the respiratory chain. Couples the redox reaction to proton translocation (for every two electrons transferred, four hydrogen ions are translocated across the cytoplasmic membrane), and thus conserves the redox energy in a proton gradient. The chain is NADH-quinone oxidoreductase subunit B 2 from Cereibacter sphaeroides (strain ATCC 17025 / ATH 2.4.3) (Rhodobacter sphaeroides).